A 172-amino-acid chain; its full sequence is Small ribosomal subunit protein uS5 (172 aa).

Residues 13–76 (LVEKMISVNR…EQARHNMMKI (64 aa)) enclose the S5 DRBM domain.

The protein belongs to the universal ribosomal protein uS5 family. In terms of assembly, part of the 30S ribosomal subunit. Contacts proteins S4 and S8.

With S4 and S12 plays an important role in translational accuracy. Functionally, located at the back of the 30S subunit body where it stabilizes the conformation of the head with respect to the body. The polypeptide is Small ribosomal subunit protein uS5 (Chromobacterium violaceum (strain ATCC 12472 / DSM 30191 / JCM 1249 / CCUG 213 / NBRC 12614 / NCIMB 9131 / NCTC 9757 / MK)).